A 1938-amino-acid polypeptide reads, in one-letter code: Myosin-4 (1938 aa).

Residues 33–82 (DAKSSVFVADPKESFVKATVQSREGGKVTAKTEAGATVTVKEDQVFPMNP) form the Myosin N-terminal SH3-like domain. At serine 36 the chain carries Phosphoserine. Residues threonine 64 and threonine 69 each carry the phosphothreonine modification. Residues 86 to 781 (DKIEDMAMMT…LLGLLEEMRD (696 aa)) enclose the Myosin motor domain. 179–186 (GESGAGKT) contributes to the ATP binding site. Residue tyrosine 389 is modified to Phosphotyrosine. Position 392 is a phosphoserine (serine 392). Phosphothreonine is present on threonine 419. Position 424 is a phosphotyrosine (tyrosine 424). Residues 658 to 680 (LNKLMTNLRSTHPHFVRCIIPNE) form an actin-binding region. Pros-methylhistidine is present on histidine 756. Residues 760 to 774 (KFGHTKVFFKAGLLG) are actin-binding. In terms of domain architecture, IQ spans 784–813 (LAQLITRTQAMCRGFLARVEYKKMVERRES). Positions 845 to 1926 (SAETEKEMAN…ESQVNKLRVK (1082 aa)) form a coiled coil. Phosphoserine is present on residues serine 1091, serine 1095, serine 1161, and serine 1236. A Phosphothreonine modification is found at threonine 1240. Position 1242 is a phosphoserine (serine 1242). Threonine 1254 is modified (phosphothreonine). Phosphoserine is present on serine 1260. Threonine 1264 bears the Phosphothreonine mark. Serine 1277 carries the post-translational modification Phosphoserine. A Phosphothreonine modification is found at threonine 1285. 4 positions are modified to phosphoserine: serine 1287, serine 1291, serine 1302, and serine 1305. Tyrosine 1463 is subject to Phosphotyrosine. The residue at position 1466 (threonine 1466) is a Phosphothreonine. Serine 1473 is subject to Phosphoserine. Tyrosine 1491 is modified (phosphotyrosine). Serine 1494 is modified (phosphoserine). Threonine 1500 carries the post-translational modification Phosphothreonine. Residue serine 1513 is modified to Phosphoserine. Threonine 1516 bears the Phosphothreonine mark. A phosphoserine mark is found at serine 1541, serine 1553, serine 1573, serine 1599, serine 1602, serine 1713, and serine 1725. Phosphothreonine is present on residues threonine 1729 and threonine 1735. A Phosphoserine modification is found at serine 1738.

The protein belongs to the TRAFAC class myosin-kinesin ATPase superfamily. Myosin family. Muscle myosin is a hexameric protein that consists of 2 heavy chain subunits (MHC), 2 alkali light chain subunits (MLC) and 2 regulatory light chain subunits (MLC-2).

It is found in the cytoplasm. The protein resides in the myofibril. Functionally, muscle contraction. This chain is Myosin-4 (MYH4), found in Oryctolagus cuniculus (Rabbit).